A 768-amino-acid chain; its full sequence is Actin filament-associated protein 1-like 1 (768 aa).

The segment at 82-145 (DLRDMPEDDG…GKSPEYISSH (64 aa)) is disordered. 4 positions are modified to phosphoserine: S94, S98, S104, and S153. Residues 173–211 (GELKSSYNDSDAMSSSYESYDEEEEEGKSPQPRHQWPSE) are disordered. A compositionally biased stretch (low complexity) spans 177 to 190 (SSYNDSDAMSSSYE). The PH 1 domain maps to 220 to 316 (ECRICAFLLR…WLKVIREVSK (97 aa)). A phosphoserine mark is found at S329 and S343. One can recognise a PH 2 domain in the interval 418 to 512 (EVPCCGYLNV…WLGLLLVEMG (95 aa)). Y557 carries the post-translational modification Phosphotyrosine. A disordered region spans residues 566–604 (QDEEPERPTGAQVKRHASSCSEKSHRVDPQVKVKRHASS). A compositionally biased stretch (basic and acidic residues) spans 587–596 (EKSHRVDPQV). Positions 611–700 (GKNRAEEDAR…VAVKERLQQS (90 aa)) form a coiled coil. The segment at 705–768 (PALGLSVSSK…KAKEWEMKKT (64 aa)) is disordered. Positions 710–729 (SVSSKPKSGETANKPQNSVP) are enriched in polar residues. S747 bears the Phosphoserine mark. Positions 759–768 (KAKEWEMKKT) are enriched in basic and acidic residues.

As to quaternary structure, interacts with CTTN. As to expression, expressed in breast, colon and brain. In all 3 tissues, expressed in the microvasculature (at protein level). In addition, in the breast, found in the contractile myoepithelial cell layer which surrounds the breast ducts (at protein level). In the colon, expressed in the mucous membrane and colonic crypts and in the smooth muscle cell layer which provide movement of the colon (at protein level). In the cerebellum, localized around the Purkinje neurons and the granule cells of the granular layer, but not inside cell bodies (at protein level). Outside of the cerebellar cortex, expressed in glial cells (at protein level). Highly expressed away from the cell bodies within the dentate nucleus (at protein level).

Its subcellular location is the cytoplasm. It is found in the cell projection. It localises to the podosome. The protein resides in the invadopodium. The protein localises to the cytoskeleton. Its subcellular location is the stress fiber. In terms of biological role, may be involved in podosome and invadosome formation. The chain is Actin filament-associated protein 1-like 1 (AFAP1L1) from Homo sapiens (Human).